Here is a 317-residue protein sequence, read N- to C-terminus: Vacuolar arginine/histidine antiporter YPQ2 (317 aa).

Over 1-13 the chain is Vacuolar; sequence MSCSNGIWPTVSN. In terms of domain architecture, PQ-loop 1 spans 8-71; the sequence is WPTVSNLCGS…AKLTGQLLFQ (64 aa). The helical transmembrane segment at 14-34 threads the bilayer; the sequence is LCGSLSFFTSVISLFPQIIET. Over 35-39 the chain is Cytoplasmic; it reads YRDKS. Residues 40 to 62 form a helical membrane-spanning segment; the sequence is VDGLSPYFLLAWLCGDITSLIGA. Residues 63–71 are Vacuolar-facing; that stretch reads KLTGQLLFQ. A helical membrane pass occupies residues 72–94; the sequence is ILLAIYFLLNDSFVCGQYYYYGV. Residues 95–143 are Cytoplasmic-facing; sequence LHENKLATVGHEPKPLLPELVENGELLREEEDMIQGGSSAESPRSSRRR. Phosphoserine is present on serine 136. The helical transmembrane segment at 144–164 threads the bilayer; the sequence is SAITAALAIAHTISTASAYPL. Topologically, residues 165-184 are vacuolar; the sequence is NVGSTQSQVGPPGDGKNSQL. The chain crosses the membrane as a helical span at residues 185–205; the sequence is GTILSWIGASFYVGARIPQLI. Residues 185-247 enclose the PQ-loop 2 domain; the sequence is GTILSWIGAS…SCRFLDNQNK (63 aa). The Cytoplasmic portion of the chain corresponds to 206–215; that stretch reads KNYNRKSTDG. A helical membrane pass occupies residues 216 to 236; sequence LSPFLFATTLLCNITYNLSIF. Over 237-249 the chain is Vacuolar; the sequence is TSCRFLDNQNKRE. A helical transmembrane segment spans residues 250–270; it reads FIVNELPFIFGSAGTIAFDLI. Over 271–317 the chain is Cytoplasmic; it reads YFYQYYILYATDMQLRELERELYSPEEDSAAQLVTERTSLLSGETQT.

Belongs to the laat-1 family.

It localises to the vacuole membrane. It carries out the reaction L-histidine(out) + L-arginine(in) = L-histidine(in) + L-arginine(out). Amino acid transporter that moves arginine across the vacuolar membrane. Active during nitrogen starvation when it exports stored vacuolar arginine to the cytosol, for use as a nitrogen source. Has been shown to function as an arginine/histidine antiporter when substrate is present on both sides of the membrane, but may also function as a uniporter. This Saccharomyces cerevisiae (strain ATCC 204508 / S288c) (Baker's yeast) protein is Vacuolar arginine/histidine antiporter YPQ2 (YPQ2).